A 127-amino-acid chain; its full sequence is Large ribosomal subunit protein bL21 (127 aa).

Belongs to the bacterial ribosomal protein bL21 family. As to quaternary structure, part of the 50S ribosomal subunit. Contacts protein L20.

Functionally, this protein binds to 23S rRNA in the presence of protein L20. The polypeptide is Large ribosomal subunit protein bL21 (Blochmanniella floridana).